The sequence spans 181 residues: Large ribosomal subunit protein bL17 (181 aa).

Residues 141–159 (KAASATAESAPVATANDAA) are compositionally biased toward low complexity. Residues 141-181 (KAASATAESAPVATANDAAPAEEAEVQGVKDPAEDCEAKAD) form a disordered region. The span at 171–181 (DPAEDCEAKAD) shows a compositional bias: basic and acidic residues.

The protein belongs to the bacterial ribosomal protein bL17 family. Part of the 50S ribosomal subunit. Contacts protein L32.

The chain is Large ribosomal subunit protein bL17 from Geotalea daltonii (strain DSM 22248 / JCM 15807 / FRC-32) (Geobacter daltonii).